A 525-amino-acid polypeptide reads, in one-letter code: Coronin-2A (525 aa).

WD repeat units follow at residues 80–120, 130–170, 178–217, 220–263, and 269–308; these read GHRG…LTKN, GHAR…SVIM, CHQD…VLQE, YKGH…VPVT, and GSSG…PHLN. The stretch at 485–524 forms a coiled coil; sequence QMFYRQQDEIRRLRELVTQREVQAKQLELEIRNLRMNSPR.

Belongs to the WD repeat coronin family. Binds actin. Component of the N-Cor repressor complex, at least composed of NCOR1, NCOR2, HDAC3, TBL1X, TBL1R, CORO2A and GPS2.

The protein is Coronin-2A (CORO2A) of Bos taurus (Bovine).